Reading from the N-terminus, the 233-residue chain is Small ribosomal subunit protein uS3 (233 aa).

The 69-residue stretch at 39–107 folds into the KH type-2 domain; the sequence is VRQFLASELT…PSQINIAEVR (69 aa).

Belongs to the universal ribosomal protein uS3 family. In terms of assembly, part of the 30S ribosomal subunit. Forms a tight complex with proteins S10 and S14.

Its function is as follows. Binds the lower part of the 30S subunit head. Binds mRNA in the 70S ribosome, positioning it for translation. The protein is Small ribosomal subunit protein uS3 of Baumannia cicadellinicola subsp. Homalodisca coagulata.